Here is a 163-residue protein sequence, read N- to C-terminus: Putative 4-hydroxy-4-methyl-2-oxoglutarate aldolase (163 aa).

Residues 76–79 (GDML) and arginine 98 each bind substrate. Position 99 (aspartate 99) interacts with a divalent metal cation.

This sequence belongs to the class II aldolase/RraA-like family. As to quaternary structure, homotrimer. It depends on a divalent metal cation as a cofactor.

The enzyme catalyses 4-hydroxy-4-methyl-2-oxoglutarate = 2 pyruvate. The catalysed reaction is oxaloacetate + H(+) = pyruvate + CO2. Catalyzes the aldol cleavage of 4-hydroxy-4-methyl-2-oxoglutarate (HMG) into 2 molecules of pyruvate. Also contains a secondary oxaloacetate (OAA) decarboxylase activity due to the common pyruvate enolate transition state formed following C-C bond cleavage in the retro-aldol and decarboxylation reactions. The sequence is that of Putative 4-hydroxy-4-methyl-2-oxoglutarate aldolase from Pseudomonas putida (strain GB-1).